Reading from the N-terminus, the 673-residue chain is DNA ligase (673 aa).

NAD(+) is bound by residues 33–37 (DSVYD), 82–83 (SL), and E117. The N6-AMP-lysine intermediate role is filled by K119. R140, E177, K295, and K319 together coordinate NAD(+). Residues C413, C416, C431, and C436 each coordinate Zn(2+). Residues 595–673 (AVSQVLAGKK…EAELLALDPK (79 aa)) enclose the BRCT domain.

It belongs to the NAD-dependent DNA ligase family. LigA subfamily. Mg(2+) is required as a cofactor. It depends on Mn(2+) as a cofactor.

The catalysed reaction is NAD(+) + (deoxyribonucleotide)n-3'-hydroxyl + 5'-phospho-(deoxyribonucleotide)m = (deoxyribonucleotide)n+m + AMP + beta-nicotinamide D-nucleotide.. DNA ligase that catalyzes the formation of phosphodiester linkages between 5'-phosphoryl and 3'-hydroxyl groups in double-stranded DNA using NAD as a coenzyme and as the energy source for the reaction. It is essential for DNA replication and repair of damaged DNA. This Synechococcus sp. (strain JA-3-3Ab) (Cyanobacteria bacterium Yellowstone A-Prime) protein is DNA ligase.